A 643-amino-acid polypeptide reads, in one-letter code: MLLGASLVGVLLFSKLVLKLPWTQVGFSLLFLYLGSGGWRFIRVFIKTIRRDIFGGLVLLKVKAKVRQCLQERRTVPILFASTVRRHPDKTALIFEGTDTHWTFRQLDEYSSSVANFLQARGLASGDVAAIFMENRNEFVGLWLGMAKLGVEAALINTNLRRDALLHCLTTSRARALVFGSEMASAICEVHASLDPSLSLFCSGSWEPGAVPPSTEHLDPLLKDAPKHLPSCPDKGFTDKLFYIYTSGTTGLPKAAIVVHSRYYRMAALVYYGFRMRPNDIVYDCLPLYHSAGNIVGIGQCLLHGMTVVIRKKFSASRFWDDCIKYNCTIVQYIGELCRYLLNQPPREAENQHQVRMALGNGLRQSIWTNFSSRFHIPQVAEFYGATECNCSLGNFDSQVGACGFNSRILSFVYPIRLVRVNEDTMELIRGPDGVCIPCQPGEPGQLVGRIIQKDPLRRFDGYLNQGANNKKIAKDVFKKGDQAYLTGDVLVMDELGYLYFRDRTGDTFRWKGENVSTTEVEGTLSRLLDMADVAVYGVEVPGTEGRAGMAAVASPTGNCDLERFAQVLEKELPLYARPIFLRLLPELHKTGTYKFQKTELRKEGFDPAIVKDPLFYLDAQKGRYVPLDQEAYSRIQAGEEKL.

2 helical membrane-spanning segments follow: residues 20-42 (LPWT…WRFI) and 139-156 (FVGL…AALI). 243 to 254 (YIYTSGTTGLPK) provides a ligand contact to AMP.

It belongs to the ATP-dependent AMP-binding enzyme family. As to expression, expressed at highest levels in brain, testis, colon and kidney. Expressed at medium levels in heart and liver, small intestine and stomach. Expressed at low levels in peripheral leukocytes, bone marrow, skeletal muscle and aorta. Expressed in adipose tissue. Expressed in brain gray matter.

It is found in the endoplasmic reticulum membrane. It carries out the reaction a fatty acid(in) = a fatty acid(out). It catalyses the reaction (9Z,12Z)-octadecadienoate(out) = (9Z,12Z)-octadecadienoate(in). The catalysed reaction is (9Z)-octadecenoate(out) = (9Z)-octadecenoate(in). The enzyme catalyses hexadecanoate(out) = hexadecanoate(in). It carries out the reaction a long-chain fatty acid + ATP + CoA = a long-chain fatty acyl-CoA + AMP + diphosphate. It catalyses the reaction hexadecanoate + ATP + CoA = hexadecanoyl-CoA + AMP + diphosphate. The catalysed reaction is (E)-hexadec-2-enoate + ATP + CoA = (2E)-hexadecenoyl-CoA + AMP + diphosphate. The enzyme catalyses (9Z)-octadecenoate + ATP + CoA = (9Z)-octadecenoyl-CoA + AMP + diphosphate. It carries out the reaction (5Z,8Z,11Z,14Z)-eicosatetraenoate + ATP + CoA = (5Z,8Z,11Z,14Z)-eicosatetraenoyl-CoA + AMP + diphosphate. It catalyses the reaction a very long-chain fatty acid + ATP + CoA = a very long-chain fatty acyl-CoA + AMP + diphosphate. The catalysed reaction is tetracosanoate + ATP + CoA = tetracosanoyl-CoA + AMP + diphosphate. Functionally, mediates the levels of long-chain fatty acids (LCFA) in the cell by facilitating their transport across cell membranes. Appears to be the principal fatty acid transporter in small intestinal enterocytes. Also functions as an acyl-CoA ligase catalyzing the ATP-dependent formation of fatty acyl-CoA using LCFA and very-long-chain fatty acids (VLCFA) as substrates, which prevents fatty acid efflux from cells and might drive more fatty acid uptake. Plays a role in the formation of the epidermal barrier. Required for fat absorption in early embryogenesis. Probably involved in fatty acid transport across the blood barrier. Indirectly inhibits RPE65 via substrate competition and via production of VLCFA derivatives like lignoceroyl-CoA. Prevents light-induced degeneration of rods and cones. The chain is Long-chain fatty acid transport protein 4 from Homo sapiens (Human).